The chain runs to 370 residues: MVDQGFFTLKKEKKKNILIKLFYVKILGFCFCDSWSSSDMAHSLTSLAVFQSVIRKEMVRSLHVYESVEIEREFWFKSKSCYVEKKAKPLFRSEDFRRPEISEGSVFGTWRCIFVFRFNHSLPRFPTLLCLSRNPKLEDIPNLANELKFISELKPSKIYEEEQCSSSTEGYYNSDLPKPRKLVLKQDLNCLPDSETESEESVNEKTEHSEFENDKTEQSESDAKTEILKKKKRTPSRHVAELSLEELSKYFDLTIVEASRNLKVGLTVLKKKCREFGIPRWPHRKIKSLDCLIHDLQREAEKQQEKNEAAAMAVAKKQEKLETEKRNIVKRPFMEIGIETKKFRQENFKKRHRASRAKKNQESLVTSSST.

A disordered region spans residues 193–232; that stretch reads DSETESEESVNEKTEHSEFENDKTEQSESDAKTEILKKKK. The span at 202–228 shows a compositional bias: basic and acidic residues; that stretch reads VNEKTEHSEFENDKTEQSESDAKTEIL. The 86-residue stretch at 224-309 folds into the RWP-RK domain; sequence KTEILKKKKR…AEKQQEKNEA (86 aa). Positions 283 to 328 form a coiled coil; that stretch reads HRKIKSLDCLIHDLQREAEKQQEKNEAAAMAVAKKQEKLETEKRNI. The interval 347–370 is disordered; it reads NFKKRHRASRAKKNQESLVTSSST. Residues 349-358 are compositionally biased toward basic residues; that stretch reads KKRHRASRAK.

The protein localises to the nucleus. Its function is as follows. Putative transcription factor. In Arabidopsis thaliana (Mouse-ear cress), this protein is Protein RKD5 (RKD5).